Reading from the N-terminus, the 491-residue chain is UDP-N-acetylmuramate--L-alanine ligase (491 aa).

Residue 126-132 (GTHGKTT) participates in ATP binding.

Belongs to the MurCDEF family.

It is found in the cytoplasm. The enzyme catalyses UDP-N-acetyl-alpha-D-muramate + L-alanine + ATP = UDP-N-acetyl-alpha-D-muramoyl-L-alanine + ADP + phosphate + H(+). It functions in the pathway cell wall biogenesis; peptidoglycan biosynthesis. Functionally, cell wall formation. This is UDP-N-acetylmuramate--L-alanine ligase from Yersinia enterocolitica serotype O:8 / biotype 1B (strain NCTC 13174 / 8081).